We begin with the raw amino-acid sequence, 494 residues long: Hepatic triacylglycerol lipase (494 aa).

An N-terminal signal peptide occupies residues 1 to 21 (MGNHLQISVSLVLCIFIQSSA). Residue Asn79 is glycosylated (N-linked (GlcNAc...) asparagine). The active-site Nucleophile is the Ser169. Asp195 serves as the catalytic Charge relay system. The segment at 255–278 (CHFLELYKHIAEHGLNAITQTINC) is essential for determining substrate specificity. His280 acts as the Charge relay system in catalysis. A PLAT domain is found at 353-487 (YHYQFKIQFI…HPTQEKVFVK (135 aa)). A glycan (N-linked (GlcNAc...) asparagine) is linked at Asn398.

Belongs to the AB hydrolase superfamily. Lipase family. In terms of assembly, homodimer.

It localises to the secreted. It catalyses the reaction a triacylglycerol + H2O = a diacylglycerol + a fatty acid + H(+). The catalysed reaction is a 1-acyl-sn-glycero-3-phosphocholine + H2O = sn-glycerol 3-phosphocholine + a fatty acid + H(+). The enzyme catalyses a 1,2-diacyl-sn-glycero-3-phosphocholine + H2O = a 2-acyl-sn-glycero-3-phosphocholine + a fatty acid + H(+). It carries out the reaction 1,2-di-(9Z-octadecenoyl)-sn-glycerol + H2O = 2-(9Z-octadecenoyl)-glycerol + (9Z)-octadecenoate + H(+). It catalyses the reaction 1,2,3-tri-(9Z-octadecenoyl)-glycerol + H2O = 2,3-di-(9Z)-octadecenoyl-sn-glycerol + (9Z)-octadecenoate + H(+). The catalysed reaction is 1-(9Z-octadecenoyl)-sn-glycero-3-phospho-L-serine + H2O = sn-glycero-3-phospho-L-serine + (9Z)-octadecenoate + H(+). The enzyme catalyses 1-hexadecanoyl-sn-glycero-3-phosphocholine + H2O = sn-glycerol 3-phosphocholine + hexadecanoate + H(+). It carries out the reaction 1,3-di-(9Z-octadecenoyl)-glycerol + H2O = 3-(9Z-octadecenoyl)-sn-glycerol + (9Z)-octadecenoate + H(+). It catalyses the reaction 1,2,3-tri-(9Z-octadecenoyl)-glycerol + H2O = di-(9Z)-octadecenoylglycerol + (9Z)-octadecenoate + H(+). The catalysed reaction is 1,2-di-(9Z-octadecenoyl)-sn-glycero-3-phosphocholine + H2O = (9Z-octadecenoyl)-sn-glycero-3-phosphocholine + (9Z)-octadecenoate + H(+). The enzyme catalyses 1,2,3-tributanoylglycerol + H2O = dibutanoylglycerol + butanoate + H(+). It carries out the reaction 1,2-dihexadecanoyl-sn-glycero-3-phosphocholine + H2O = hexadecanoyl-sn-glycero-3-phosphocholine + hexadecanoate + H(+). Its activity is regulated as follows. Phospholipase A1 and lysophospholipase activities are inhibited by annexin II. Its function is as follows. Catalyzes the hydrolysis of triglycerides and phospholipids present in circulating plasma lipoproteins, including chylomicrons, intermediate density lipoproteins (IDL), low density lipoproteins (LDL) of large size and high density lipoproteins (HDL), releasing free fatty acids (FFA) and smaller lipoprotein particles. Also exhibits lysophospholipase activity. Can hydrolyze both neutral lipid and phospholipid substrates but shows a greater binding affinity for neutral lipid substrates than phospholipid substrates. In native LDL, preferentially hydrolyzes the phosphatidylcholine species containing polyunsaturated fatty acids at sn-2 position. This is Hepatic triacylglycerol lipase (Lipc) from Rattus norvegicus (Rat).